A 420-amino-acid chain; its full sequence is Subtilisin-like protease 7 (420 aa).

The first 20 residues, 1–20 (MGFITKAIPLALAAASVING), serve as a signal peptide directing secretion. Residues 21–119 (AEIMETRAGV…IERDARVQIN (99 aa)) constitute a propeptide that is removed on maturation. Residues 36–118 (KYIVVMNDGM…YIERDARVQI (83 aa)) enclose the Inhibitor I9 domain. Positions 129–413 (SWGLARVGSK…SFPLNIYEEQ (285 aa)) constitute a Peptidase S8 domain. Catalysis depends on charge relay system residues Asp161 and His192. N-linked (GlcNAc...) asparagine glycosylation is found at Asn222 and Asn252. Ser346 acts as the Charge relay system in catalysis. Asn396 is a glycosylation site (N-linked (GlcNAc...) asparagine).

Belongs to the peptidase S8 family.

The protein resides in the secreted. Secreted subtilisin-like serine protease with keratinolytic activity that contributes to pathogenicity. This Arthroderma benhamiae (strain ATCC MYA-4681 / CBS 112371) (Trichophyton mentagrophytes) protein is Subtilisin-like protease 7 (SUB7).